The following is a 152-amino-acid chain: Small ribosomal subunit protein uS13 (152 aa).

It belongs to the universal ribosomal protein uS13 family. Component of the small ribosomal subunit.

It is found in the cytoplasm. Its function is as follows. Component of the small ribosomal subunit. The ribosome is a large ribonucleoprotein complex responsible for the synthesis of proteins in the cell. Plays an essential role in early embryonic development. This Danio rerio (Zebrafish) protein is Small ribosomal subunit protein uS13 (rps18).